A 205-amino-acid polypeptide reads, in one-letter code: MKIQSNVIKIIIVISLLIGVGALYLLLSLRTPEKPLAGQVNIYEDNVKIGGDFELIDQNGEIFNSDKLKGNLSLIYFGFTSCPDICPTSLNKMTEIVEILNKHKIDILPVFITIDPKRDTPIALKEYLKHFHPKFIGLTGNEQQIKDVTDKFKVFYARVHGDDDDPNYMLDHSSFTYLIDANGKYLKHFYLDSSPKEMMEFLRNE.

Residues Cys82, Cys86, and His172 each contribute to the Cu cation site.

This sequence belongs to the SCO1/2 family.

This Rickettsia conorii (strain ATCC VR-613 / Malish 7) protein is SCO2-like protein RC0895.